A 311-amino-acid polypeptide reads, in one-letter code: Tryptophan 2,3-dioxygenase (311 aa).

The interval 1-37 is disordered; the sequence is MQPPGGDAPAGCPFSGARAAQPAQAAHEAPHVPGEAD. The span at 17–27 shows a compositional bias: low complexity; that stretch reads ARAAQPAQAAH. Residues 80-84, Tyr142, and Arg146 contribute to the substrate site; that span reads FIIQH. Residue His269 participates in heme binding. Thr283 lines the substrate pocket.

Belongs to the tryptophan 2,3-dioxygenase family. In terms of assembly, homotetramer. Heme is required as a cofactor.

It catalyses the reaction L-tryptophan + O2 = N-formyl-L-kynurenine. It participates in amino-acid degradation; L-tryptophan degradation via kynurenine pathway; L-kynurenine from L-tryptophan: step 1/2. Its function is as follows. Heme-dependent dioxygenase that catalyzes the oxidative cleavage of the L-tryptophan (L-Trp) pyrrole ring and converts L-tryptophan to N-formyl-L-kynurenine. Catalyzes the oxidative cleavage of the indole moiety. This Burkholderia cenocepacia (strain ATCC BAA-245 / DSM 16553 / LMG 16656 / NCTC 13227 / J2315 / CF5610) (Burkholderia cepacia (strain J2315)) protein is Tryptophan 2,3-dioxygenase.